The following is a 604-amino-acid chain: Elongation factor 4 (604 aa).

In terms of domain architecture, tr-type G spans 9–191 (DAIRNFCIIA…AVISRVPAPA (183 aa)). GTP contacts are provided by residues 21-26 (DHGKST) and 138-141 (NKID).

This sequence belongs to the TRAFAC class translation factor GTPase superfamily. Classic translation factor GTPase family. LepA subfamily.

The protein resides in the cell inner membrane. It carries out the reaction GTP + H2O = GDP + phosphate + H(+). Required for accurate and efficient protein synthesis under certain stress conditions. May act as a fidelity factor of the translation reaction, by catalyzing a one-codon backward translocation of tRNAs on improperly translocated ribosomes. Back-translocation proceeds from a post-translocation (POST) complex to a pre-translocation (PRE) complex, thus giving elongation factor G a second chance to translocate the tRNAs correctly. Binds to ribosomes in a GTP-dependent manner. This is Elongation factor 4 from Prosthecochloris aestuarii (strain DSM 271 / SK 413).